A 560-amino-acid polypeptide reads, in one-letter code: Putative transport protein VP1232 (560 aa).

A run of 5 helical transmembrane segments spans residues L8–G28, L37–F57, F66–F86, H91–S111, and V164–L184. RCK C-terminal domains are found at residues L205 to G292 and K293 to F376. 6 helical membrane-spanning segments follow: residues L386–F406, V409–L429, A443–A463, V478–A498, A506–N526, and A539–L559.

The protein belongs to the AAE transporter (TC 2.A.81) family. YbjL subfamily.

It is found in the cell membrane. This is Putative transport protein VP1232 from Vibrio parahaemolyticus serotype O3:K6 (strain RIMD 2210633).